The following is a 169-amino-acid chain: Oleosin Cor a 15 (169 aa).

The next 2 membrane-spanning stretches (helical) occupy residues 38–58 (IAVV…GLTF) and 70–90 (PLFV…GLAV). The short motif at 70–81 (PLFVLCSPVLVP) is the Proline-knot element. Composition is skewed to basic and acidic residues over residues 122–131 (QMEHAKRRAQ) and 160–169 (EGGRGEEKKT). Residues 122–169 (QMEHAKRRAQDTAGHLGQKARETGQTVTGKGQEAGKTLEGGRGEEKKT) form a disordered region.

It belongs to the oleosin family. Expressed in seeds (at protein level).

Its subcellular location is the lipid droplet. The protein localises to the membrane. May have a structural role to stabilize the lipid body during desiccation of the seed by preventing coalescence of the oil. Probably interacts with both lipid and phospholipid moieties of lipid bodies. May also provide recognition signals for specific lipase anchorage in lipolysis during seedling growth. The chain is Oleosin Cor a 15 from Corylus avellana (European hazel).